An 824-amino-acid polypeptide reads, in one-letter code: Leucine--tRNA ligase (824 aa).

Residues 41–51 carry the 'HIGH' region motif; sequence PYPSGTLHVGH. A 'KMSKS' region motif is present at residues 580 to 584; the sequence is KMSKS. Position 583 (lysine 583) interacts with ATP.

It belongs to the class-I aminoacyl-tRNA synthetase family.

The protein localises to the cytoplasm. It carries out the reaction tRNA(Leu) + L-leucine + ATP = L-leucyl-tRNA(Leu) + AMP + diphosphate. In Thermotoga maritima (strain ATCC 43589 / DSM 3109 / JCM 10099 / NBRC 100826 / MSB8), this protein is Leucine--tRNA ligase.